We begin with the raw amino-acid sequence, 301 residues long: Glutamyl-Q tRNA(Asp) synthetase (301 aa).

Residues 9–13 and Glu-45 each bind L-glutamate; that span reads RFAPS. The short motif at 12-22 is the 'HIGH' region element; that stretch reads PSPTGPLHLGS. The Zn(2+) site is built by Cys-101, Cys-103, Tyr-121, and Cys-125. Positions 179 and 197 each coordinate L-glutamate. Residues 235–239 carry the 'KMSKS' region motif; sequence KLSKQ. ATP is bound at residue Lys-238.

It belongs to the class-I aminoacyl-tRNA synthetase family. GluQ subfamily. It depends on Zn(2+) as a cofactor.

Catalyzes the tRNA-independent activation of glutamate in presence of ATP and the subsequent transfer of glutamate onto a tRNA(Asp). Glutamate is transferred on the 2-amino-5-(4,5-dihydroxy-2-cyclopenten-1-yl) moiety of the queuosine in the wobble position of the QUC anticodon. This Thiobacillus denitrificans (strain ATCC 25259 / T1) protein is Glutamyl-Q tRNA(Asp) synthetase.